The primary structure comprises 127 residues: Small ribosomal subunit protein uS13 (127 aa).

Positions 95 to 127 (GLPVHGQRTSTNARTRKGPRRAAVKKKGGAKKK) are disordered. Residues 108–127 (RTRKGPRRAAVKKKGGAKKK) show a composition bias toward basic residues.

This sequence belongs to the universal ribosomal protein uS13 family. In terms of assembly, part of the 30S ribosomal subunit. Forms a loose heterodimer with protein S19. Forms two bridges to the 50S subunit in the 70S ribosome.

Located at the top of the head of the 30S subunit, it contacts several helices of the 16S rRNA. In the 70S ribosome it contacts the 23S rRNA (bridge B1a) and protein L5 of the 50S subunit (bridge B1b), connecting the 2 subunits; these bridges are implicated in subunit movement. Contacts the tRNAs in the A and P-sites. The polypeptide is Small ribosomal subunit protein uS13 (Desulfatibacillum aliphaticivorans).